A 751-amino-acid polypeptide reads, in one-letter code: Probable alpha-galactosidase C (751 aa).

The first 27 residues, 1–27 (MFGSPKRAALAAASLLAIFGNGPSVMA), serve as a signal peptide directing secretion. N-linked (GlcNAc...) asparagine glycosylation is found at asparagine 49, asparagine 57, asparagine 162, asparagine 186, asparagine 194, asparagine 366, asparagine 433, asparagine 452, and asparagine 500. Aspartate 510 serves as the catalytic Nucleophile. Aspartate 572 serves as the catalytic Proton donor. N-linked (GlcNAc...) asparagine glycosylation occurs at asparagine 720.

This sequence belongs to the glycosyl hydrolase 36 family. As to quaternary structure, homotetramer. It depends on Mg(2+) as a cofactor. The cofactor is NAD(+).

It localises to the secreted. The enzyme catalyses Hydrolysis of terminal, non-reducing alpha-D-galactose residues in alpha-D-galactosides, including galactose oligosaccharides, galactomannans and galactolipids.. In terms of biological role, hydrolyzes a variety of simple alpha-D-galactoside as well as more complex molecules such as oligosaccharides and polysaccharides. The sequence is that of Probable alpha-galactosidase C (aglC) from Aspergillus flavus (strain ATCC 200026 / FGSC A1120 / IAM 13836 / NRRL 3357 / JCM 12722 / SRRC 167).